The primary structure comprises 338 residues: Taste receptor type 2 member 39 (338 aa).

Residues 1–30 lie on the Extracellular side of the membrane; sequence MLGRCFPPDTKEKQQLRMTKLCDPAESELS. Residues 31–51 traverse the membrane as a helical segment; the sequence is PFLITLILAVLLAEYLIGIIA. The Cytoplasmic segment spans residues 52 to 74; that stretch reads NGFIMAIHAAEWVQNKAVSTSGR. Residues 75 to 95 traverse the membrane as a helical segment; sequence ILVFLSVSRIALQSLMMLEIT. Topologically, residues 96–116 are extracellular; that stretch reads ISSTSLSFYSEDAVYYAFKIS. Residues 117-137 form a helical membrane-spanning segment; sequence FIFLNFCSLWFAAWLSFFYFV. Topologically, residues 138–156 are cytoplasmic; it reads KIANFSYPLFLKLRWRITG. Residues 157 to 177 form a helical membrane-spanning segment; the sequence is LIPWLLWLSVFISFSHSMFCI. At 178–205 the chain is on the extracellular side; sequence NICTVYCNNSFPIHSSNSTKKTYLSEIN. Asn185 and Asn194 each carry an N-linked (GlcNAc...) asparagine glycan. Residues 206 to 226 form a helical membrane-spanning segment; the sequence is VVGLAFFFNLGIVTPLIMFIL. At 227–262 the chain is on the cytoplasmic side; that stretch reads TATLLILSLKRHTLHMGSNATGSNDPSMEAHMGAIK. A helical membrane pass occupies residues 263-283; the sequence is AISYFLILYIFNAVALFIYLS. Topologically, residues 284–291 are extracellular; sequence NMFDINSL. The helical transmembrane segment at 292-312 threads the bilayer; the sequence is WNNLCQIIMAAYPAGHSILPI. The Cytoplasmic portion of the chain corresponds to 313–338; the sequence is QDNPGLRRAWKRLQLRLHLYPKEWTL.

This sequence belongs to the G-protein coupled receptor T2R family.

It is found in the membrane. Its function is as follows. Receptor that may play a role in the perception of bitterness and is gustducin-linked. May play a role in sensing the chemical composition of the gastrointestinal content. The activity of this receptor may stimulate alpha gustducin, mediate PLC-beta-2 activation and lead to the gating of TRPM5. This chain is Taste receptor type 2 member 39 (TAS2R39), found in Pan paniscus (Pygmy chimpanzee).